We begin with the raw amino-acid sequence, 231 residues long: Ribonuclease HII (231 aa).

The RNase H type-2 domain maps to 38–227 (ELVAGGDEAG…IKSFYGQLKL (190 aa)). Positions 44, 45, and 136 each coordinate a divalent metal cation.

The protein belongs to the RNase HII family. Mn(2+) is required as a cofactor. It depends on Mg(2+) as a cofactor.

It localises to the cytoplasm. It catalyses the reaction Endonucleolytic cleavage to 5'-phosphomonoester.. Functionally, endonuclease that specifically degrades the RNA of RNA-DNA hybrids. The polypeptide is Ribonuclease HII (Carboxydothermus hydrogenoformans (strain ATCC BAA-161 / DSM 6008 / Z-2901)).